We begin with the raw amino-acid sequence, 420 residues long: Trichothecene biosynthesis transcription regulator TRI10 (420 aa).

It belongs to the TRI10 transcription regulator family.

Its subcellular location is the nucleus. Functionally, transcriptional activator of all of the trichothecene biosynthesis genes. Acts upstream of the cluster-encoded transcription factor TRI6 and is necessary for full expression of both the other trichothecene genes and the genes for the primary metabolic pathway that precedes the trichothecene biosynthetic pathway. This is Trichothecene biosynthesis transcription regulator TRI10 from Fusarium sporotrichioides.